The sequence spans 180 residues: Major urinary protein 1 (180 aa).

Residues 1–18 (MKMLLLLCLGLTLVCVHA) form the signal peptide. C82 and C175 form a disulfide bridge.

This sequence belongs to the calycin superfamily. Lipocalin family. Abundant in the urine of adult male mice but absent from that of females.

It is found in the secreted. Its function is as follows. Binds pheromones that are released from drying urine of males. These pheromones affect the sexual behavior of females. This Mus musculus (Mouse) protein is Major urinary protein 1 (Mup1).